A 299-amino-acid polypeptide reads, in one-letter code: Mitochondrial 2-oxodicarboxylate carrier (299 aa).

Solcar repeat units follow at residues 11–100 (NEAS…YKKL), 107–196 (SPAL…VKNI), and 205–294 (LEFL…TYSW). The next 6 helical transmembrane spans lie at 17–37 (ILAGGSAGLVEICLMHPLDVV), 62–82 (MIFRTEGLFGFYKGILPPILA), 100–120 (LLGYVSLSPALTFAVAGLGSG), 179–199 (HGVFNMVYFGFYFNVKNIIPV), 211–231 (FGIGLLSGTIASVINIPFDVA), and 274–290 (IMRLGPGGAVMLLVYEY).

Belongs to the mitochondrial carrier (TC 2.A.29) family.

Its subcellular location is the mitochondrion inner membrane. The catalysed reaction is 2-oxoadipate(in) + 2-oxoglutarate(out) = 2-oxoadipate(out) + 2-oxoglutarate(in). It catalyses the reaction hexanedioate(in) + 2-oxoglutarate(out) = hexanedioate(out) + 2-oxoglutarate(in). The enzyme catalyses L-2-aminoadipate(in) + 2-oxoglutarate(out) = L-2-aminoadipate(out) + 2-oxoglutarate(in). It carries out the reaction glutarate(in) + 2-oxoglutarate(out) = glutarate(out) + 2-oxoglutarate(in). The catalysed reaction is 2-oxoheptanedioate(in) + 2-oxoglutarate(out) = 2-oxoheptanedioate(out) + 2-oxoglutarate(in). It catalyses the reaction heptanedioate(in) + 2-oxoglutarate(out) = heptanedioate(out) + 2-oxoglutarate(in). The enzyme catalyses citrate(in) + 2-oxoglutarate(out) = citrate(out) + 2-oxoglutarate(in). Functionally, transports dicarboxylates across the inner membranes of mitochondria by a counter-exchange mechanism. Can transport 2-oxoadipate (2-oxohexanedioate), 2-oxoglutarate, adipate (hexanedioate), glutarate, and to a lesser extent, pimelate (heptanedioate), 2-oxopimelate (2-oxoheptanedioate), 2-aminoadipate (2-aminohexanedioate), oxaloacetate, and citrate. Plays a central role in catabolism of lysine, hydroxylysine, and tryptophan, by transporting common metabolite intermediates (such as 2-oxoadipate) into the mitochondria, where it is converted into acetyl-CoA and can enter the citric acid (TCA) cycle. The protein is Mitochondrial 2-oxodicarboxylate carrier (SLC25A21) of Bos taurus (Bovine).